The following is a 670-amino-acid chain: DNA ligase (670 aa).

NAD(+)-binding positions include 33–37, 82–83, and E114; these read DVEYD and SL. The N6-AMP-lysine intermediate role is filled by K116. Residues R137, E174, K291, and K315 each coordinate NAD(+). Residues C409, C412, C427, and C433 each contribute to the Zn(2+) site. The 78-residue stretch at 593–670 folds into the BRCT domain; sequence DQELPLEGKV…TEEDLIALIS (78 aa).

The protein belongs to the NAD-dependent DNA ligase family. LigA subfamily. Mg(2+) is required as a cofactor. Requires Mn(2+) as cofactor.

It catalyses the reaction NAD(+) + (deoxyribonucleotide)n-3'-hydroxyl + 5'-phospho-(deoxyribonucleotide)m = (deoxyribonucleotide)n+m + AMP + beta-nicotinamide D-nucleotide.. DNA ligase that catalyzes the formation of phosphodiester linkages between 5'-phosphoryl and 3'-hydroxyl groups in double-stranded DNA using NAD as a coenzyme and as the energy source for the reaction. It is essential for DNA replication and repair of damaged DNA. In Vibrio atlanticus (strain LGP32) (Vibrio splendidus (strain Mel32)), this protein is DNA ligase.